The primary structure comprises 382 residues: Neuropeptide Y receptor type 1 (382 aa).

Residues 1–33 (MNSTLFSKVENHSIHYNASENSPLLAFENDDCH) are Extracellular-facing. N-linked (GlcNAc...) asparagine glycosylation is found at Asn-2, Asn-11, and Asn-17. Residues 34 to 54 (LPLAVIFTLALAYGAVIILGV) traverse the membrane as a helical segment. At 55 to 75 (SGNLALIIIILKQKEMRNVTN) the chain is on the cytoplasmic side. The chain crosses the membrane as a helical span at residues 76 to 96 (ILIVNLSFSDLLVAVMCLPFT). Residues 97 to 115 (FVYTLMDHWVFGETMCKLN) lie on the Extracellular side of the membrane. An intrachain disulfide couples Cys-112 to Cys-197. Residues 116–136 (PFVQCVSITVSIFSLVLIAVE) form a helical membrane-spanning segment. Topologically, residues 137-153 (RHQLIINPRGWRPNNRH) are cytoplasmic. A helical transmembrane segment spans residues 154–174 (AYIGITVIWVLAVASSLPFVI). Residues 175 to 210 (YQILTDEPFQNVSLAAFKDKYVCFDKFPSDSHRLSY) are Extracellular-facing. Residues 211–231 (TTLLLVLQYFGPLCFIFICYF) form a helical membrane-spanning segment. The Cytoplasmic portion of the chain corresponds to 232 to 259 (KIYIRLKRRNNMMDKIRDSKYRSSETKR). The helical transmembrane segment at 260 to 280 (INIMLLSIVVAFAVCWLPLTI) threads the bilayer. Residues 281 to 298 (FNTVFDWNHQIIATCNHN) are Extracellular-facing. The helical transmembrane segment at 299–319 (LLFLLCHLTAMISTCVNPIFY) threads the bilayer. Over 320 to 382 (GFLNKNFQRD…KISMNDNEKV (63 aa)) the chain is Cytoplasmic. Cys-337 carries S-palmitoyl cysteine lipidation. Residues Ser-367 and Ser-375 each carry the phosphoserine modification.

This sequence belongs to the G-protein coupled receptor 1 family. As to expression, the alpha form is highly expressed in the brain, heart, kidney, spleen, skeletal muscle, and lung, whereas the beta receptor mRNA was not detected in these tissues. However, the beta form is expressed in mouse embryonic developmental stage (7 and 11 days), bone marrow cells and several hematopoietic cell lines.

It localises to the cell membrane. In terms of biological role, receptor for neuropeptide Y and peptide YY. In Mus musculus (Mouse), this protein is Neuropeptide Y receptor type 1 (Npy1r).